A 294-amino-acid chain; its full sequence is Universal stress protein MSMEG_3950/MSMEI_3859 (294 aa).

G13 is an ATP binding site. K109 participates in a covalent cross-link: Isoglutamyl lysine isopeptide (Lys-Gln) (interchain with Q-Cter in protein Pup). Residues 117–123 (GNRGMGA), 131–132 (ST), G164, D197, 261–267 (GSHGRGG), and 275–277 (SVS) contribute to the ATP site.

It belongs to the universal stress protein A family.

This chain is Universal stress protein MSMEG_3950/MSMEI_3859, found in Mycolicibacterium smegmatis (strain ATCC 700084 / mc(2)155) (Mycobacterium smegmatis).